The primary structure comprises 134 residues: ATP synthase epsilon chain, chloroplastic (134 aa).

It belongs to the ATPase epsilon chain family. F-type ATPases have 2 components, CF(1) - the catalytic core - and CF(0) - the membrane proton channel. CF(1) has five subunits: alpha(3), beta(3), gamma(1), delta(1), epsilon(1). CF(0) has three main subunits: a, b and c.

The protein localises to the plastid. Its subcellular location is the chloroplast thylakoid membrane. Produces ATP from ADP in the presence of a proton gradient across the membrane. This Phalaenopsis aphrodite subsp. formosana (Moth orchid) protein is ATP synthase epsilon chain, chloroplastic.